A 673-amino-acid polypeptide reads, in one-letter code: Vasorin (673 aa).

The signal sequence occupies residues 1-24; sequence MHSRSCLPPLLLLLLVLLGSGVQG. An LRRNT domain is found at 25 to 53; that stretch reads CPSGCQCNQPQTVFCTARQGTTVPRDVPP. Residues 25–576 lie on the Extracellular side of the membrane; that stretch reads CPSGCQCNQP…VTQAREGNLP (552 aa). LRR repeat units follow at residues 54-75, 78-99, 102-123, 126-147, 150-170, 171-192, 194-215, 218-239, 241-265, and 266-288; these read DTVG…CFAG, GLQL…IFQP, NLSN…TFRG, RLER…AFDA, RLLE…LHLP, RLLL…ILDT, NVEA…LFGR, NLHD…IQGL, GLTR…AGLT, and ALQE…SSLF. N-linked (GlcNAc...) asparagine glycosylation is found at N102 and N118. Residue N274 is glycosylated (N-linked (GlcNAc...) asparagine). The LRRCT domain maps to 299-352; the sequence is NPFNCLCPLSWFGPWVRENHVVLASPEETRCHFPPKNAGRLLLDLDYADFGCPV. Residues 369–389 are disordered; sequence PTLSTSSQAPTWPSLTEPTTQ. Positions 370–389 are enriched in polar residues; it reads TLSTSSQAPTWPSLTEPTTQ. The 38-residue stretch at 406 to 443 folds into the EGF-like domain; it reads QPQDCPASICLNGGSCRLGARHHWECLCPEGFIGLYCE. Cystine bridges form between C410–C421, C415–C431, and C433–C442. Positions 463-559 constitute a Fibronectin type-III domain; that stretch reads PLLPLSIEPV…ACGEANTSQA (97 aa). Residues N501, N529, and N555 are each glycosylated (N-linked (GlcNAc...) asparagine). The chain crosses the membrane as a helical span at residues 577 to 597; it reads LLIAPALAAVLLAVLAAAGAA. The Cytoplasmic segment spans residues 598–673; that stretch reads YCVRRARATS…QGVLPAKHYI (76 aa). Residues 608-648 form a disordered region; sequence TAQDKGQVGPGTGPLELEGVKAPLEPGSKATEGGGEALSGG.

Interacts with TGFB1, TGFB2 and TGFB3. N-glycosylated.

It localises to the membrane. Its function is as follows. May act as an inhibitor of TGF-beta signaling. This chain is Vasorin (Vasn), found in Mus musculus (Mouse).